The sequence spans 385 residues: 3-dehydroquinate synthase (385 aa).

Residues 122–126, 146–147, Lys159, and Lys168 each bind NAD(+); these read GVIGD and TT. 3 residues coordinate Zn(2+): Glu201, His264, and His282.

The protein belongs to the sugar phosphate cyclases superfamily. Dehydroquinate synthase family. Requires Co(2+) as cofactor. It depends on Zn(2+) as a cofactor. NAD(+) is required as a cofactor.

It is found in the cytoplasm. The enzyme catalyses 7-phospho-2-dehydro-3-deoxy-D-arabino-heptonate = 3-dehydroquinate + phosphate. Its pathway is metabolic intermediate biosynthesis; chorismate biosynthesis; chorismate from D-erythrose 4-phosphate and phosphoenolpyruvate: step 2/7. Catalyzes the conversion of 3-deoxy-D-arabino-heptulosonate 7-phosphate (DAHP) to dehydroquinate (DHQ). In Rhodospirillum rubrum (strain ATCC 11170 / ATH 1.1.1 / DSM 467 / LMG 4362 / NCIMB 8255 / S1), this protein is 3-dehydroquinate synthase.